A 425-amino-acid chain; its full sequence is MASKEMFEDTVEERVINEEYKIWKKNTPFLYDLVMTHALQWPSLTVQWLPEVTKPEGKDYALHWLVLGTHTSDEQNHLVVARVHIPNDDAQFDASHCDSDKGEFGGFGSVTGKIECEIKINHEGEVNRARYMPQNPHIIATKTPSSDVLVFDYTKHPAKPDPSGECNPDLRLRGHQKEGYGLSWNSNLSGHLLSASDDHTVCLWDINAGPKEGKIVDAKAIFTGHSAVVEDVAWHLLHESLFGSVADDQKLMIWDTRSNTTSKPSHLVDAHTAEVNCLSFNPYSEFILATGSADKTVALWDLRNLKLKLHTFESHKDEIFQVHWSPHNETILASSGTDRRLNVWDLSKIGEEQSAEDAEDGPPELLFIHGGHTAKISDFSWNPNEPWVICSVSEDNIMQIWQMAENIYNDEESDVTTSELEGQGS.

Position 2 is an N-acetylalanine (A2). A Phosphoserine modification is found at S3. At K4 the chain carries N6-acetyllysine; alternate. K4 is covalently cross-linked (Glycyl lysine isopeptide (Lys-Gly) (interchain with G-Cter in SUMO2); alternate). K4 participates in a covalent cross-link: Glycyl lysine isopeptide (Lys-Gly) (interchain with G-Cter in ubiquitin); alternate. Position 10 is a phosphothreonine (T10). Phosphoserine occurs at positions 13 and 95. WD repeat units follow at residues 47–122 (QWLP…KINH), 128–173 (RARY…LRLR), 181–217 (GLSW…KIVD), 228–269 (VVED…HLVD), 275–312 (VNCL…LHTF), 318–369 (EIFQ…LFIH), and 376–403 (ISDF…IWQM). K101 is covalently cross-linked (Glycyl lysine isopeptide (Lys-Gly) (interchain with G-Cter in SUMO2)). K119 is subject to N6-acetyllysine. K155 is covalently cross-linked (Glycyl lysine isopeptide (Lys-Gly) (interchain with G-Cter in SUMO2)). Residue K159 is modified to N6-acetyllysine; alternate. Residue K159 forms a Glycyl lysine isopeptide (Lys-Gly) (interchain with G-Cter in SUMO2); alternate linkage. S354 is subject to Phosphoserine.

It belongs to the WD repeat RBAP46/RBAP48/MSI1 family. Binds directly to helix 1 of the histone fold of histone H4, a region that is not accessible when H4 is in chromatin. Subunit of the type B histone acetyltransferase (HAT) complex, composed of RBBP7 and HAT1. Subunit of the core histone deacetylase (HDAC) complex, which is composed of HDAC1, HDAC2, RBBP4 and RBBP7. The core HDAC complex associates with SIN3A, ARID4B/SAP180, SAP18, SAP30, SAP130, SUDS3/SAP45 and possibly ARID4A/RBP1 and ING1 to form the SIN3 HDAC complex. Component of the nucleosome remodeling and deacetylase (NuRD) repressor complex, composed of core proteins MTA1, MTA2, MTA3, RBBP4, RBBP7, HDAC1, HDAC2, MBD2, MBD3, and peripherally associated proteins CDK2AP1, CDK2AP2, GATAD2A, GATAD2B, CHD3, CHD4 and CHD5. The exact stoichiometry of the NuRD complex is unknown, and some subunits such as MBD2 and MBD3, GATAD2A and GATAD2B, and CHD3, CHD4 and CHD5 define mutually exclusive NuRD complexes. The NuRD complex may interact with MBD3L1. The NuRD complex may interact with MBD3L2. Subunit of the PRC2/EED-EZH2 complex, which is composed of at least EED, EZH2, RBBP4, RBBP7 and SUZ12. The PRC2/EED-EZH2 complex may also associate with HDAC1. Component of the NURF-1 ISWI chromatin remodeling complex (also called the nucleosome-remodeling factor (NURF) complex) at least composed of SMARCA1 (isoform 2), BPTF, RBBP4 and RBBP7. Within the complex interacts with isoform 2 of SMARCA1. Component of the BPFT-SMARCA1 complex at least composed of SMARCA1 (isoform 1), BPFT, RBBP4 and RBBP7; the complex is catalytically inactive and does not remodel chromatin. Within the complex interacts with isoform 1 of SMARCA1. Interacts with BRCA1. Interacts with CDK2AP1. Interacts with CENPA. Interacts with CHD3. Interacts with CHD4. Interacts with CREBBP, and this interaction may be enhanced by the binding of phosphorylated CREB1 to CREBBP. Interacts with HDAC7. Interacts with MTA1. Interacts with PWWP2B. Interacts with RB1 (via viral protein-binding domain). Interacts with SUV39H1.

The protein resides in the nucleus. In terms of biological role, core histone-binding subunit that may target chromatin remodeling factors, histone acetyltransferases and histone deacetylases to their histone substrates in a manner that is regulated by nucleosomal DNA. Component of several complexes which regulate chromatin metabolism. These include the type B histone acetyltransferase (HAT) complex, which is required for chromatin assembly following DNA replication; the core histone deacetylase (HDAC) complex, which promotes histone deacetylation and consequent transcriptional repression; the nucleosome remodeling and histone deacetylase complex (the NuRD complex), which promotes transcriptional repression by histone deacetylation and nucleosome remodeling; and the PRC2/EED-EZH2 complex, which promotes repression of homeotic genes during development; and the NURF (nucleosome remodeling factor) complex. In Homo sapiens (Human), this protein is Histone-binding protein RBBP7 (RBBP7).